Consider the following 315-residue polypeptide: Malate dehydrogenase (315 aa).

Residues 11-16 and D35 each bind NAD(+); that span reads GAGHVG. Substrate-binding residues include R84 and R90. Residues N97 and 120-122 contribute to the NAD(+) site; that span reads VTN. Positions 122 and 153 each coordinate substrate. The active-site Proton acceptor is H177.

This sequence belongs to the LDH/MDH superfamily. MDH type 3 family.

The catalysed reaction is (S)-malate + NAD(+) = oxaloacetate + NADH + H(+). Its function is as follows. Catalyzes the reversible oxidation of malate to oxaloacetate. This Thermosulfidibacter takaii (strain DSM 17441 / JCM 13301 / NBRC 103674 / ABI70S6) protein is Malate dehydrogenase.